Reading from the N-terminus, the 248-residue chain is Triosephosphate isomerase (248 aa).

Position 9–11 (9–11 (NWK)) interacts with substrate. The active-site Electrophile is the H94. E166 (proton acceptor) is an active-site residue. Residues G172, S212, and 233–234 (GG) each bind substrate.

The protein belongs to the triosephosphate isomerase family. Homodimer.

It localises to the cytoplasm. The catalysed reaction is D-glyceraldehyde 3-phosphate = dihydroxyacetone phosphate. It functions in the pathway carbohydrate biosynthesis; gluconeogenesis. The protein operates within carbohydrate degradation; glycolysis; D-glyceraldehyde 3-phosphate from glycerone phosphate: step 1/1. In terms of biological role, involved in the gluconeogenesis. Catalyzes stereospecifically the conversion of dihydroxyacetone phosphate (DHAP) to D-glyceraldehyde-3-phosphate (G3P). This is Triosephosphate isomerase from Alkaliphilus metalliredigens (strain QYMF).